Reading from the N-terminus, the 914-residue chain is Coatomer subunit beta' (914 aa).

WD repeat units lie at residues 13–54 (SRSD…KDFE), 55–94 (VCDV…KVHS), 97–136 (AHSD…ACQR), 140–180 (GHTH…ANFT), 183–224 (GHEK…CVQT), 227–266 (GHAQ…LETC), and 352–390 (ACEI…NKAF).

Belongs to the WD repeat COPB2 family. As to quaternary structure, oligomeric complex that consists of at least the alpha, beta, beta', gamma, delta, epsilon and zeta subunits.

It localises to the cytoplasm. It is found in the golgi apparatus membrane. Its subcellular location is the cytoplasmic vesicle. The protein resides in the COPI-coated vesicle membrane. In terms of biological role, the coatomer is a cytosolic protein complex that binds to dilysine motifs and reversibly associates with Golgi non-clathrin-coated vesicles, which further mediate biosynthetic protein transport from the ER, via the Golgi up to the trans Golgi network. Coatomer complex is required for budding from Golgi membranes, and is essential for the retrograde Golgi-to-ER transport of dilysine-tagged proteins. In Drosophila melanogaster (Fruit fly), this protein is Coatomer subunit beta'.